The sequence spans 858 residues: MTTEKSLAAEAENSQHQQQKEEGEGATNSGQQETQLEEASQAAAAEGSDQGEQKLKASNGDTPTHEDLTKNKERTSESRGLSRLLSSFLKRPKSQVSEEEGREVESEKEKGEGGQKEIELGNSLDEDIILKAPIAAPEPELKTDPSLDLHSLSSIETQPAQEEHREDPDSETKEGEGIEECSGTEVKEDPESRAEREPEASQKPVRRHRNMHCKVSLLDDTVYECVVEKHAKGQDLLKRVCEHLNLLEEDYFGLALWDSATSKTWLDSAKEIKKQVRGVPWNFTFNVKFYPPDPAQLTEDITRYYLCLQLRQDIVAGRLPCSFATLALLGSYTIQSELGDYDPELHGMDYVSDFKLAPNQTKELEEKVMELHKSYRSMTPAQADLEFLENAKKLSMYGVDLHKAKDLEGVDIILGVCSSGLLVYKDKLRINRFPWPKVLKISYKRSSFFIKIRPGEQEHYESTIGFKLPSYRAAKKLWKVCVEHHTFFRLTSTDTIPKSKFLALGSKFRYSGRTQAQTRQASALIDRPAPHFERTASKRASRSLDGAAAAESTDRSPRPTSAPAIAQSQVTEGPGAPIKKTPKEAVKVEEKRGEEPAEPAEPEPTEAWKVEKTHTEVTVPTSNGDQTQKLAGKGEDLIRMRKKKRERLDGENIYIRHSNLMLEDLDKSQEEIKKHHASISELKKNFMESVPEPRPSEWDKRLSTHSPFRTLNINGQVPTGDGPPLVKTQTVTISDTANAVKSEIPTKDVPIVHTETKTITYEAAQTEDSNGDLDPGVLLTAQTITSETTSSTTTTQITKTVKGGISETRIEKRIVITGDADIDHDQVLVQAIKEAKEQHPDMSVTKVVVHQETEISEE.

The tract at residues Met-1–Asp-125 is disordered. Phosphoserine is present on Ser-14. Over residues Gln-31–Gln-50 the composition is skewed to low complexity. A Phosphothreonine modification is found at Thr-62. Residues Pro-63–Glu-77 show a composition bias toward basic and acidic residues. The span at Ser-78–Leu-89 shows a compositional bias: low complexity. Ser-86, Ser-87, Ser-97, Ser-106, Ser-123, Ser-151, Ser-153, and Ser-154 each carry phosphoserine. Positions Glu-103–Glu-119 are enriched in basic and acidic residues. Residues Ile-155–His-208 are disordered. Basic and acidic residues-rich tracts occupy residues Gln-161–Glu-176 and Glu-185–Ala-200. The residue at position 192 (Ser-192) is a Phosphoserine. Residues Met-211–Ser-492 enclose the FERM domain. The residue at position 223 (Tyr-223) is a Phosphotyrosine. Thr-379 is subject to Phosphothreonine. The segment at Thr-495–Trp-608 is hydrophilic. A disordered region spans residues Thr-518–Asp-636. A phosphoserine mark is found at Ser-522, Ser-541, Ser-543, and Ser-556. 2 stretches are compositionally biased toward basic and acidic residues: residues Thr-581 to Glu-595 and Glu-606 to Thr-615. A spectrin--actin-binding region spans residues Lys-609–Pro-707. Over residues Glu-616–Lys-629 the composition is skewed to polar residues. At Tyr-654 the chain carries Phosphotyrosine. Phosphoserine is present on residues Ser-658, Ser-668, Ser-678, Ser-703, and Ser-706. The segment at Thr-710–Glu-858 is C-terminal (CTD). Thr-730 and Thr-853 each carry phosphothreonine.

As to quaternary structure, binds with a high affinity to glycophorin and with lower affinity to band III protein. Associates with the nuclear mitotic apparatus. Binds calmodulin, CPAP and DLG1. Also found to associate with contractile apparatus and tight junctions. Interacts with NUMA1; this interaction is negatively regulated by CDK1 during metaphase and promotes anaphase-specific localization of NUMA1 in symmetrically dividing cells. Interacts with ATP2B1; regulates small intestinal calcium absorption through regulation of membrane expression of ATP2B1. O-glycosylated; contains N-acetylglucosamine side chains in the C-terminal domain. Post-translationally, phosphorylated at multiple sites by different protein kinases and each phosphorylation event selectively modulates the protein's functions. In terms of processing, phosphorylation on Tyr-654 reduces the ability of 4.1 to promote the assembly of the spectrin/actin/4.1 ternary complex.

The protein resides in the nucleus. The protein localises to the cytoplasm. It localises to the cytoskeleton. Its subcellular location is the cell cortex. Its function is as follows. Protein 4.1 is a major structural element of the erythrocyte membrane skeleton. It plays a key role in regulating membrane physical properties of mechanical stability and deformability by stabilizing spectrin-actin interaction. Recruits DLG1 to membranes. Required for dynein-dynactin complex and NUMA1 recruitment at the mitotic cell cortex during anaphase. This chain is Protein 4.1, found in Mus musculus (Mouse).